Here is a 1773-residue protein sequence, read N- to C-terminus: Zinc finger CCCH domain-containing protein 19 (1773 aa).

The segment at 145-166 is disordered; the sequence is SGDRLEENKEVSMEEEPSSHEL. Over residues 147 to 156 the composition is skewed to basic and acidic residues; that stretch reads DRLEENKEVS. A coiled-coil region spans residues 196–218; the sequence is GEEIESDLESKKEKVDVIEEETT. 3 disordered regions span residues 270 to 290, 361 to 409, and 434 to 591; these read IGEGAKDLTDGDAKEGVDVTE, DVDK…AGQT, and ISEM…KTVK. 2 stretches are compositionally biased toward basic and acidic residues: residues 273–286 and 361–378; these read GAKDLTDGDAKEGV and DVDKDSEAGKSLDIHVPE. Residues 403–437 adopt a coiled-coil conformation; the sequence is AEEAGQTVDLEEIREENQELSKELAQVDETKISEM. 2 stretches are compositionally biased toward basic and acidic residues: residues 444-455 and 497-513; these read MIKDEDQEKDDN and KVDRTKIAEVSEETDTR. 2 stretches are compositionally biased toward acidic residues: residues 514–529 and 551–572; these read IEDEDQEKDDEMTDVA and EEMTETQEDSVMADEEPEEVEE. A compositionally biased stretch (basic residues) spans 578–588; the sequence is GGKRKRGRNTK. The short motif at 581 to 588 is the Nuclear localization signal 1 element; that stretch reads RKRGRNTK. Residues 599 to 665 form a PHD-type zinc finger; sequence EDVCFMCFDG…TYLCYTCMFS (67 aa). Basic and acidic residues predominate over residues 741–751; that stretch reads AKRPLKGHETN. A disordered region spans residues 741–797; it reads AKRPLKGHETNASKQGTASETDYVTDGGSDSDSSPKKRKTRSRSKSGSAEKILSSGD. The span at 752–762 shows a compositional bias: polar residues; the sequence is ASKQGTASETD. Positions 801 to 884 constitute an SWIB/MDM2 domain; sequence SDETMEWASK…LNLLDSHFLK (84 aa). Over residues 903 to 919 the composition is skewed to basic and acidic residues; sequence PNHVDVDENLDHPVKSG. Positions 903 to 935 are disordered; sequence PNHVDVDENLDHPVKSGKDKKRKTRKKNVRKGR. The segment covering 920–935 has biased composition (basic residues); the sequence is KDKKRKTRKKNVRKGR. A Nuclear localization signal 2 motif is present at residues 921-928; the sequence is DKKRKTRK. One can recognise a Plus3 domain in the interval 944–1076; that stretch reads AVDMHNINLI…KAIALQEVRV (133 aa). The segment covering 1139 to 1152 has biased composition (basic and acidic residues); that stretch reads EEIPEIHADPKMDP. Residues 1139 to 1274 are disordered; sequence EEIPEIHADP…PETPARSSRA (136 aa). A compositionally biased stretch (acidic residues) spans 1153 to 1163; that stretch reads DCESEDEDEKE. The span at 1193-1212 shows a compositional bias: polar residues; it reads FSSNESWTGTSNYSNTSANR. Ser1281 carries the phosphoserine modification. The GYF domain occupies 1307-1361; it reads EKIWHYKDPSGKVQGPFSMAQLRKWNNTGYFPAKLEIWKANESPLDSVLLTDALA. Composition is skewed to polar residues over residues 1409-1433, 1441-1469, 1499-1509, and 1518-1528; these read RNSQDTWSQGGSLPSPTPNQITTPT, SRWSPTKPSPQSANQSMNYSVAQSGQSQT, VSVNHSATLHS, and SWGSMQTDHGG. Disordered regions lie at residues 1409-1469, 1485-1605, and 1649-1746; these read RNSQ…QSQT, QPQT…SWGQ, and GQTQ…QQNN. A compositionally biased stretch (low complexity) spans 1529–1555; it reads SNTPSSQNNSTSYGTPSPSVLPSQSQP. Residues 1569 to 1579 show a composition bias toward polar residues; that stretch reads SQPNAQAQAQW. Composition is skewed to low complexity over residues 1585-1602 and 1666-1677; these read NNNQNSAQPQAPANQNSS and QSQSQSQVQAQA. A compositionally biased stretch (polar residues) spans 1678–1708; that stretch reads GTTGSGWMQPGQGIQSGNSNQNWGTQNQTAI. A compositionally biased stretch (low complexity) spans 1722-1735; it reads GNQQQSQNGDSGYG. Over residues 1737–1746 the composition is skewed to polar residues; that stretch reads NRQSGGQQNN. Residues 1747–1773 form a C3H1-type zinc finger; sequence FKGQRVCKFFRENGHCRKGASCNYLHN.

In terms of assembly, interacts with unmethylated histone H3 and AGO2. The interaction with AGO2 in required to direct DNA methylation and silencing. Expressed in seedlings, mostly in the vasculature and shoot apices of young seedlings.

The protein resides in the nucleus. In terms of biological role, plays a central role in integrating RNA silencing and chromatin signals in 21 nt siRNA-dependent DNA methylation on cytosine pathway leading to transcriptional gene silencing of specific sequences. Involved in a chromatin-based RNA silencing pathway that encompasses both post-transcriptional gene silencing (PTGS) (e.g. RDR1, RDR6 and AGO2) and transcriptional gene silencing (TGS) (e.g. siRNA-dependent DNA methylation and histone H3) components. Mediates siRNA accumulation at specific chromatin loci. Binds H3K4me0 through its PHD to enforce low levels of H3K4 methylation and gene silencing at a subset of genomic loci. This Arabidopsis thaliana (Mouse-ear cress) protein is Zinc finger CCCH domain-containing protein 19 (NERD).